The following is a 340-amino-acid chain: Dof zinc finger protein DOF2.2 (340 aa).

The segment at 12-33 is disordered; the sequence is PPINWPQSANPNNHPHHHQLQE. The Dof-type zinc-finger motif lies at 94-148; it reads LKCPRCDSANTKFCYFNNYNLTQPRHFCKACRRYWTRGGALRNVPVGGGCRRNKK. Positions 96, 99, 121, and 124 each coordinate Zn(2+). 2 disordered regions span residues 138-180 and 301-340; these read PVGG…TSNV and GNISRPVSGLTSPGNQSNQYWTGQGLPGSSSNDHHHQHLM. Over residues 151-165 the composition is skewed to low complexity; sequence SGNSKSSSSSQNKQS. Composition is skewed to polar residues over residues 166–180 and 309–331; these read TSMVNATSPTNTSNV and GLTSPGNQSNQYWTGQGLPGSSS.

It is found in the nucleus. Transcription factor that binds specifically to a 5'-AA[AG]G-3' consensus core sequence. The polypeptide is Dof zinc finger protein DOF2.2 (DOF2.2) (Arabidopsis thaliana (Mouse-ear cress)).